Reading from the N-terminus, the 755-residue chain is PWWP domain-containing protein 2A (755 aa).

The span at 1–15 (MAAVAAEAAATAASP) shows a compositional bias: low complexity. A disordered region spans residues 1–153 (MAAVAAEAAA…VPPAGGDSTV (153 aa)). The span at 64–76 (DEPPLPPPPPPPG) shows a compositional bias: pro residues. 4 positions are modified to phosphoserine: S81, S102, S116, and S119. Positions 112–126 (ELPPSPASPPEQPPA) are enriched in pro residues. The interval 148 to 373 (GGDSTVSQLI…KLKTDHKVDG (226 aa)) is interaction with HDAC1 and MTA1. K208 participates in a covalent cross-link: Glycyl lysine isopeptide (Lys-Gly) (interchain with G-Cter in SUMO2). Disordered stretches follow at residues 282–301 (YNQS…KRKM), 334–384 (KEIR…KRNA), 400–562 (KVSA…GSKN), and 578–626 (SSAS…SKEE). Residues 292 to 301 (RKIKRPKRKM) show a composition bias toward basic residues. 2 stretches are compositionally biased toward basic and acidic residues: residues 346 to 356 (SKYEDKKRRNE) and 368 to 381 (DHKV…ESQK). The span at 403–421 (AQANTSKAQLSTKKVLQSK) shows a compositional bias: polar residues. The span at 422 to 444 (NMDHAKAREVLKIAKEKAQKKQN) shows a compositional bias: basic and acidic residues. The interval 423-574 (MDHAKAREVL…SVYMTLNQKK (152 aa)) is interaction with the H2A.Z/H2AZ1. Residues 508–527 (SRCTSTRSAGEAPSENQSPS) show a composition bias toward polar residues. Positions 593-603 (SSNSECSSSES) are enriched in low complexity. In terms of domain architecture, PWWP spans 655–715 (VGDIVWAKIY…LSQLSPFLEN (61 aa)).

As to quaternary structure, component of a MTA1-specific subcomplex of the NuRD complex (M1HR), composed of PWWP2A, MTA1/2, HDAC1/2, and RBBP4/7 but does not contain CHD4 and MBD3. Interacts with MTA1; the interaction mediates the association of PWWP2A with the M1HR complex. Interacts with H2A.Z/H2AZ1. Interacts (via PWWP domain) with histone H3 trimethylated at 'Lys-36' (H3K36me3). Does not interact with CHD4 and MBD3. Interacts with MTA1 and with HDAC1 in a MTA1-dependent manner. Does not interact with CHD4 and MBD3.

The protein localises to the nucleus. Functionally, chromatin-binding protein that acts as an adapter between distinct nucleosome components (H3K36me3 or H2A.Z) and chromatin-modifying complexes, contributing to the regulation of the levels of histone acetylation at actively transcribed genes. Competes with CHD4 and MBD3 for interaction with MTA1 to form a NuRD subcomplex, preventing the formation of full NuRD complex (containing CHD4 and MBD3), leading to recruitment of HDACs to gene promoters resulting in turn in the deacetylation of nearby H3K27 and H2A.Z. Plays a role in facilitating transcriptional elongation and repression of spurious transcription initiation through regulation of histone acetylation. Essential for proper mitosis progression. This is PWWP domain-containing protein 2A (PWWP2A) from Homo sapiens (Human).